The following is a 157-amino-acid chain: SsrA-binding protein (157 aa).

The protein belongs to the SmpB family.

The protein resides in the cytoplasm. Required for rescue of stalled ribosomes mediated by trans-translation. Binds to transfer-messenger RNA (tmRNA), required for stable association of tmRNA with ribosomes. tmRNA and SmpB together mimic tRNA shape, replacing the anticodon stem-loop with SmpB. tmRNA is encoded by the ssrA gene; the 2 termini fold to resemble tRNA(Ala) and it encodes a 'tag peptide', a short internal open reading frame. During trans-translation Ala-aminoacylated tmRNA acts like a tRNA, entering the A-site of stalled ribosomes, displacing the stalled mRNA. The ribosome then switches to translate the ORF on the tmRNA; the nascent peptide is terminated with the 'tag peptide' encoded by the tmRNA and targeted for degradation. The ribosome is freed to recommence translation, which seems to be the essential function of trans-translation. The chain is SsrA-binding protein from Bacillus licheniformis (strain ATCC 14580 / DSM 13 / JCM 2505 / CCUG 7422 / NBRC 12200 / NCIMB 9375 / NCTC 10341 / NRRL NRS-1264 / Gibson 46).